The following is a 465-amino-acid chain: MDNTSSVPWASAASVTCLSLDAKCHSSSAKSTASSISATPESQTMRHIAHTQRCLSRLTSLVALLLIVLPMNFSPAHSCGPGRGLGRHRARNLYPLVLKQTIPNLSEYTNSASGPLEGVIRRDSPKFKDLVPNYNRDILFRDEEGTGADRLMSKRCREKLNLLAYSVMNEWPGIRLLVTESWDEDYHHGQESLHYEGRAVTIATSDRDQSKYGMLARLAVEAGFDWVSYVSRRHIYCSVKSDSSISSHVHGCFTPESTALLESGVRKPLGELSIGDRVLSMTANGQAVYSEVILFMDRNLEQMQNFVQLHTDGGAVLTVTPAHLISVWQPESQKLTFVFADRIEEKNQVLVRDSETGELRPQRVIKVGSVRSKGVVAPLTREGTIVVNSVAASCYAVINSQSLAHWGLAPMRLLSTLEAWLPAKEQLHSSPKVVSSAEQQNGIHWYANALYKVKDYVLPQSWRHD.

A lipid anchor (N-palmitoyl cysteine) is attached at cysteine 79. Residues glutamate 143, glutamate 144, aspartate 149, threonine 179, glutamate 180, aspartate 183, and aspartate 185 each contribute to the Ca(2+) site. The Cholesterol glycine ester moiety is linked to residue glycine 251.

This sequence belongs to the hedgehog family. Interacts with shf. Post-translationally, the C-terminal part of the hedgehog protein precursor displays an autoproteolysis activity that results in the cleavage of the full-length protein into two parts (N-product and C-product). In addition, the C-terminal part displays a cholesterol transferase activity that results by the covalent attachment of a cholesterol moiety to the C-terminal of the newly generated N-product. The N-product is the active species in both local and long-range signaling, whereas the C-product has no signaling activity. Cholesterylation is required for N-product targeting to lipid rafts and multimerization. In terms of processing, N-palmitoylation by Rasp of the hedgehog N-product, within the secretory pathway, is required for the embryonic and larval patterning activities of the hedgehog signal.

The protein localises to the nucleus. It is found in the cytoplasm. The protein resides in the cell membrane. It carries out the reaction glycyl-L-cysteinyl-[protein] + cholesterol + H(+) = [protein]-C-terminal glycyl cholesterol ester + N-terminal L-cysteinyl-[protein]. In terms of biological role, the C-terminal part of the hedgehog protein precursor displays an autoproteolysis activity that results in the cleavage of the full-length protein into two parts (N-product and C-product). In addition, the C-terminal part displays a cholesterol transferase activity that results by the covalent attachment of a cholesterol moiety to the C-terminal of the newly generated N-product. Once cleaved, the C-product has no signaling activity and diffuses from the cell. Its function is as follows. The dually lipidated hedgehog protein N-product is a morphogen which is essential for a variety of patterning events during development. Establishes the anterior-posterior axis of the embryonic segments and patterns the larval imaginal disks. Binds to the patched (ptc) receptor, which functions in association with smoothened (smo), to activate the transcription of target genes wingless (wg), decapentaplegic (dpp) and ptc. In the absence of hh, ptc represses the constitutive signaling activity of smo through fused (fu). Essential component of a signaling pathway which regulates the Duox-dependent gut immune response to bacterial uracil; required to activate Cad99C-dependent endosome formation, norpA-dependent Ca2+ mobilization and p38 MAPK, which are essential steps in the Duox-dependent production of reactive oxygen species (ROS) in response to intestinal bacterial infection. During photoreceptor differentiation, it up-regulates transcription of Ubr3, which in turn promotes the hh-signaling pathway by mediating the ubiquitination and degradation of cos. The sequence is that of Protein hedgehog from Drosophila yakuba (Fruit fly).